The primary structure comprises 356 residues: tRNA N6-adenosine threonylcarbamoyltransferase (356 aa).

A divalent metal cation is bound by residues H124, H128, and Y145. Residues Y145 to G149, D177, G192, E196, and N287 contribute to the substrate site. A divalent metal cation is bound at residue D315.

Belongs to the KAE1 / TsaD family. Component of the EKC/KEOPS complex composed of at least BUD32, CGI121, GON7, KAE1 and PCC1; the whole complex dimerizes. A divalent metal cation serves as cofactor.

Its subcellular location is the cytoplasm. The protein resides in the nucleus. It catalyses the reaction L-threonylcarbamoyladenylate + adenosine(37) in tRNA = N(6)-L-threonylcarbamoyladenosine(37) in tRNA + AMP + H(+). Component of the EKC/KEOPS complex that is required for the formation of a threonylcarbamoyl group on adenosine at position 37 (t(6)A37) in tRNAs that read codons beginning with adenine. The complex is probably involved in the transfer of the threonylcarbamoyl moiety of threonylcarbamoyl-AMP (TC-AMP) to the N6 group of A37. KAE1 likely plays a direct catalytic role in this reaction, but requires other protein(s) of the complex to fulfill this activity. The EKC/KEOPS complex also promotes both telomere uncapping and telomere elongation. The complex is required for efficient recruitment of transcriptional coactivators. This is tRNA N6-adenosine threonylcarbamoyltransferase from Yarrowia lipolytica (strain CLIB 122 / E 150) (Yeast).